The primary structure comprises 702 residues: MA3 DOMAIN-CONTAINING TRANSLATION REGULATORY FACTOR 3 (702 aa).

The interval 1–100 (MEGFLTDQQR…PNDPNYDSGE (100 aa)) is disordered. Residues 53–65 (VKHRRSHAGRSIR) show a composition bias toward basic residues. Residues 81–91 (IDTDGDYHIDP) show a composition bias toward basic and acidic residues. Positions 116–237 (DYKKAAASII…PPAFLPRAAK (122 aa)) constitute an MI 1 domain. The Nuclear localization signal 1 signature appears at 267–274 (ERRWGGQT). 3 consecutive MI domains span residues 280–401 (EVKK…PSGE), 414–535 (RFKE…EISS), and 577–697 (DAKD…SLTE). The Nuclear localization signal 2 motif lies at 615–622 (VKKALVMG).

Belongs to the PDCD4 family. As to quaternary structure, interacts with EIN2, ETR2 and EIN4. Binds to EIF4A1. The association with ribosomes is modulated by cellular energy status and TOR activity. As to expression, mostly expressed in vegetative tissues, such as leaves and stems, and, to a lower extent, in roots and reproductive tissues, such as flower buds and flowers. Expressed in seedlings, roots, cauline leaf tips and flowers.

Its subcellular location is the nucleus. It is found in the cytoplasm. The protein resides in the cytosol. Its function is as follows. Involved in target of rapamycin (TOR)-regulated translation control, especially under energy-deficient conditions. Involved in the regulation of the ethylene-mediated signaling pathway. Involved in salt stress responses. Reduced cotyledons size and early flowering. The chain is MA3 DOMAIN-CONTAINING TRANSLATION REGULATORY FACTOR 3 from Arabidopsis thaliana (Mouse-ear cress).